A 299-amino-acid polypeptide reads, in one-letter code: Delta-9 desaturase-like 5 protein (299 aa).

A run of 2 helical transmembrane segments spans residues alanine 31 to phenylalanine 51 and tryptophan 55 to serine 75. Residues histidine 77–histidine 82 carry the Histidine box-1 motif. A Histidine box-2 motif is present at residues histidine 114–histidine 118. A run of 2 helical transmembrane segments spans residues isoleucine 174–leucine 194 and glycine 199–tryptophan 219. The Histidine box-3 motif lies at histidine 246–histidine 250.

Belongs to the fatty acid desaturase type 1 family. Fe cation serves as cofactor.

Its subcellular location is the endoplasmic reticulum membrane. It participates in lipid metabolism; polyunsaturated fatty acid biosynthesis. In Arabidopsis thaliana (Mouse-ear cress), this protein is Delta-9 desaturase-like 5 protein.